The following is a 104-amino-acid chain: MAVKIKRDDQVIVITGKDKGKTGTIKTVLSNGKIIIEGVNTVKKHQKPNPQADVAGGIIEQSAPMQISNVAILNSATGKADRVGFRLEDGKKVRFFKSNNELVK.

It belongs to the universal ribosomal protein uL24 family. As to quaternary structure, part of the 50S ribosomal subunit.

In terms of biological role, one of two assembly initiator proteins, it binds directly to the 5'-end of the 23S rRNA, where it nucleates assembly of the 50S subunit. One of the proteins that surrounds the polypeptide exit tunnel on the outside of the subunit. The protein is Large ribosomal subunit protein uL24 of Psychromonas ingrahamii (strain DSM 17664 / CCUG 51855 / 37).